Consider the following 119-residue polypeptide: Large ribosomal subunit protein uL22 (119 aa).

This sequence belongs to the universal ribosomal protein uL22 family. As to quaternary structure, part of the 50S ribosomal subunit.

Functionally, this protein binds specifically to 23S rRNA; its binding is stimulated by other ribosomal proteins, e.g. L4, L17, and L20. It is important during the early stages of 50S assembly. It makes multiple contacts with different domains of the 23S rRNA in the assembled 50S subunit and ribosome. The globular domain of the protein is located near the polypeptide exit tunnel on the outside of the subunit, while an extended beta-hairpin is found that lines the wall of the exit tunnel in the center of the 70S ribosome. The sequence is that of Large ribosomal subunit protein uL22 from Chlorobium chlorochromatii (strain CaD3).